A 203-amino-acid polypeptide reads, in one-letter code: MSKIISLVVAMIAVLALPIRGQQQPLSQCTPSMMTTVSPCMGFITNSSSNGTSPSSDCCNSLRSLTTGGMGCLCLIVTGTVPFNIPINRTTAVSLPRACNMPRVPLQCQANIAPAAAPGPAATFGPSMSPGPETDPIVPEPTPAAQTPQSDTTRPFTPSVDGGAPTSDDGGSTSRPSETPSSAYALSPSLLFFSIALVALKFY.

An N-terminal signal peptide occupies residues 1–21; sequence MSKIISLVVAMIAVLALPIRG. Disulfide bonds link cysteine 29–cysteine 74, cysteine 40–cysteine 58, cysteine 59–cysteine 99, and cysteine 72–cysteine 108. Residues asparagine 46, asparagine 50, and asparagine 88 are each glycosylated (N-linked (GlcNAc...) asparagine). The segment at 119–182 is disordered; that stretch reads GPAATFGPSM…TSRPSETPSS (64 aa). Polar residues-rich tracts occupy residues 144-156 and 169-179; these read AAQT…TRPF and DGGSTSRPSET. A lipid anchor (GPI-anchor amidated serine) is attached at serine 172. The propeptide at 173-203 is removed in mature form; sequence TSRPSETPSSAYALSPSLLFFSIALVALKFY.

The protein belongs to the plant LTP family. As to expression, expressed in seedlings, preferentially in hypocotyls and roots. Also observed in siliques and sepals.

It is found in the cell membrane. Probable lipid transfer protein. This chain is Non-specific lipid transfer protein GPI-anchored 20, found in Arabidopsis thaliana (Mouse-ear cress).